Here is a 195-residue protein sequence, read N- to C-terminus: Imidazoleglycerol-phosphate dehydratase (195 aa).

Belongs to the imidazoleglycerol-phosphate dehydratase family.

It localises to the cytoplasm. It catalyses the reaction D-erythro-1-(imidazol-4-yl)glycerol 3-phosphate = 3-(imidazol-4-yl)-2-oxopropyl phosphate + H2O. It functions in the pathway amino-acid biosynthesis; L-histidine biosynthesis; L-histidine from 5-phospho-alpha-D-ribose 1-diphosphate: step 6/9. This chain is Imidazoleglycerol-phosphate dehydratase, found in Sphingopyxis alaskensis (strain DSM 13593 / LMG 18877 / RB2256) (Sphingomonas alaskensis).